Reading from the N-terminus, the 566-residue chain is Oxygen-dependent choline dehydrogenase (566 aa).

7–36 (DYIICGAGSAGNVLATRLTEDPDVTVLLLE) provides a ligand contact to FAD. Positions 180 to 202 (NGYQQEGFGPMDRTVTPKGRRAS) are disordered. Residue histidine 474 is the Proton acceptor of the active site.

This sequence belongs to the GMC oxidoreductase family. It depends on FAD as a cofactor.

It carries out the reaction choline + A = betaine aldehyde + AH2. The enzyme catalyses betaine aldehyde + NAD(+) + H2O = glycine betaine + NADH + 2 H(+). Its pathway is amine and polyamine biosynthesis; betaine biosynthesis via choline pathway; betaine aldehyde from choline (cytochrome c reductase route): step 1/1. Its function is as follows. Involved in the biosynthesis of the osmoprotectant glycine betaine. Catalyzes the oxidation of choline to betaine aldehyde and betaine aldehyde to glycine betaine at the same rate. This is Oxygen-dependent choline dehydrogenase from Burkholderia lata (strain ATCC 17760 / DSM 23089 / LMG 22485 / NCIMB 9086 / R18194 / 383).